The chain runs to 256 residues: 3-dehydroquinate dehydratase (256 aa).

Residues 46-48 and R82 contribute to the 3-dehydroquinate site; that span reads EWR. H144 acts as the Proton donor/acceptor in catalysis. K171 serves as the catalytic Schiff-base intermediate with substrate. 3-dehydroquinate contacts are provided by R213, S232, and Q236.

The protein belongs to the type-I 3-dehydroquinase family. In terms of assembly, homodimer.

The catalysed reaction is 3-dehydroquinate = 3-dehydroshikimate + H2O. It participates in metabolic intermediate biosynthesis; chorismate biosynthesis; chorismate from D-erythrose 4-phosphate and phosphoenolpyruvate: step 3/7. Its function is as follows. Involved in the third step of the chorismate pathway, which leads to the biosynthesis of aromatic amino acids. Catalyzes the cis-dehydration of 3-dehydroquinate (DHQ) and introduces the first double bond of the aromatic ring to yield 3-dehydroshikimate. This Shouchella clausii (strain KSM-K16) (Alkalihalobacillus clausii) protein is 3-dehydroquinate dehydratase.